A 220-amino-acid chain; its full sequence is Aspartic protease inhibitor 8 (220 aa).

An N-terminal signal peptide occupies residues 1–23; it reads MMKCLFLLCLCLLPIVVFSSTFT. A propeptide spanning residues 24-32 is cleaved from the precursor; that stretch reads SQNLIDLPS. Cystine bridges form between C80-C125 and C174-C185.

Belongs to the protease inhibitor I3 (leguminous Kunitz-type inhibitor) family.

It is found in the vacuole. In terms of biological role, inhibitor of cathepsin D (aspartic protease) and trypsin (serine protease). May protect the plant by inhibiting proteases of invading organisms. This chain is Aspartic protease inhibitor 8, found in Solanum tuberosum (Potato).